Here is a 349-residue protein sequence, read N- to C-terminus: Glycosyltransferase 8 domain-containing protein 2 (349 aa).

The Cytoplasmic portion of the chain corresponds to 1 to 6 (MAFLRK). A helical; Signal-anchor for type II membrane protein transmembrane segment spans residues 7 to 24 (VNQVLLLLLVLTLCGILY). The Lumenal portion of the chain corresponds to 25 to 349 (KKVHKGAVLK…AGIFKLHHNR (325 aa)). N-linked (GlcNAc...) asparagine glycosylation occurs at Asn-234.

This sequence belongs to the glycosyltransferase 8 family.

It is found in the membrane. In Mus musculus (Mouse), this protein is Glycosyltransferase 8 domain-containing protein 2 (Glt8d2).